Reading from the N-terminus, the 574-residue chain is Septation ring formation regulator EzrA (574 aa).

The Extracellular portion of the chain corresponds to 1–7 (MSSGIIL). The chain crosses the membrane as a helical span at residues 8 to 26 (LIVAIVLLVIIAYLVGVII). Over 27-574 (RKRNDTLITS…YEKTRERIRF (548 aa)) the chain is Cytoplasmic. 4 coiled-coil regions span residues 102-131 (NFIR…REAL), 161-190 (ENED…FVAL), 276-379 (VTLD…QQEK), and 459-493 (QLEA…NLEE).

It belongs to the EzrA family.

It is found in the cell membrane. Functionally, negative regulator of FtsZ ring formation; modulates the frequency and position of FtsZ ring formation. Inhibits FtsZ ring formation at polar sites. Interacts either with FtsZ or with one of its binding partners to promote depolymerization. This chain is Septation ring formation regulator EzrA, found in Streptococcus equi subsp. zooepidemicus (strain H70).